The chain runs to 257 residues: Small ribosomal subunit protein uS3 (257 aa).

Residues 39–112 (IRKFLNKKYN…EIVFNVVEVR (74 aa)) form the KH type-2 domain. The interval 217–257 (HEELRKERQSSASSNHGGGKRRPSRKGPRRSQEDAATEGGN) is disordered. Positions 234–245 (GGKRRPSRKGPR) are enriched in basic residues.

This sequence belongs to the universal ribosomal protein uS3 family. In terms of assembly, part of the 30S ribosomal subunit. Forms a tight complex with proteins S10 and S14.

Binds the lower part of the 30S subunit head. Binds mRNA in the 70S ribosome, positioning it for translation. This is Small ribosomal subunit protein uS3 from Haploplasma axanthum (Acholeplasma axanthum).